A 134-amino-acid polypeptide reads, in one-letter code: Profilin-3 (134 aa).

A disulfide bridge links Cys13 with Cys118. The Involved in PIP2 interaction motif lies at 84-100 (AVIRGKKGSGGITIKKT). A Phosphothreonine modification is found at Thr114.

The protein belongs to the profilin family. In terms of assembly, occurs in many kinds of cells as a complex with monomeric actin in a 1:1 ratio. In terms of processing, phosphorylated by MAP kinases.

The protein resides in the cytoplasm. It localises to the cytoskeleton. Functionally, binds to actin and affects the structure of the cytoskeleton. At high concentrations, profilin prevents the polymerization of actin, whereas it enhances it at low concentrations. The protein is Profilin-3 of Olea europaea (Common olive).